Reading from the N-terminus, the 274-residue chain is 2,3,4,5-tetrahydropyridine-2,6-dicarboxylate N-succinyltransferase (274 aa).

Residues arginine 106 and aspartate 143 each coordinate substrate.

Belongs to the transferase hexapeptide repeat family. As to quaternary structure, homotrimer.

It localises to the cytoplasm. It catalyses the reaction (S)-2,3,4,5-tetrahydrodipicolinate + succinyl-CoA + H2O = (S)-2-succinylamino-6-oxoheptanedioate + CoA. It functions in the pathway amino-acid biosynthesis; L-lysine biosynthesis via DAP pathway; LL-2,6-diaminopimelate from (S)-tetrahydrodipicolinate (succinylase route): step 1/3. The sequence is that of 2,3,4,5-tetrahydropyridine-2,6-dicarboxylate N-succinyltransferase from Rickettsia conorii (strain ATCC VR-613 / Malish 7).